A 299-amino-acid chain; its full sequence is Ophiobolin family sesterterpenoid biosynthesis cluster acetyltransferase (299 aa).

Positions 1–20 (MYFFRALLSPVVLWPALVSG) are cleaved as a signal peptide. N-linked (GlcNAc...) asparagine glycosylation is found at N28, N58, N77, N126, N177, N212, and N282.

This sequence belongs to the bfoA family.

It participates in secondary metabolite biosynthesis; terpenoid biosynthesis. Functionally, acetyltransferase; part of the gene cluster that mediates the biosynthesis of an ophiobolin family sesterterpenoid. Its function is as follows. Sesterterpenoid synthase; part of the gene cluster that mediates the biosynthesis of an ophiobolin family sesterterpenoid. The chain is Ophiobolin family sesterterpenoid biosynthesis cluster acetyltransferase from Aspergillus terreus.